The primary structure comprises 906 residues: Kinesin-like protein KIN-7G (906 aa).

One can recognise a Kinesin motor domain in the interval 26-344 (SVAVAVRFRP…LKFAHRAKHI (319 aa)). 105-112 (GVTSSGKT) contributes to the ATP binding site. 3 coiled-coil regions span residues 346 to 385 (IQAT…RTGT), 733 to 814 (SDEF…GRNQ), and 839 to 875 (GDMN…LEKE). The tract at residues 803 to 840 (RLSSELASGRNQRRGSHGPRGARRESHTKRYEPARRGD) is disordered. A compositionally biased stretch (basic residues) spans 813–823 (NQRRGSHGPRG). The span at 824 to 840 (ARRESHTKRYEPARRGD) shows a compositional bias: basic and acidic residues.

It belongs to the TRAFAC class myosin-kinesin ATPase superfamily. Kinesin family. KIN-7 subfamily.

This Oryza sativa subsp. japonica (Rice) protein is Kinesin-like protein KIN-7G.